Here is a 312-residue protein sequence, read N- to C-terminus: Malate dehydrogenase (312 aa).

NAD(+)-binding positions include 12-17 (GAGFTG) and Asp36. Positions 87 and 93 each coordinate substrate. NAD(+)-binding positions include Asn100 and 123–125 (LTN). Asn125 is a substrate binding site. Ser149 bears the Phosphoserine mark. Arg156 provides a ligand contact to substrate. The Proton acceptor role is filled by His180.

Belongs to the LDH/MDH superfamily. MDH type 3 family.

The catalysed reaction is (S)-malate + NAD(+) = oxaloacetate + NADH + H(+). Its function is as follows. Catalyzes the reversible oxidation of malate to oxaloacetate. The polypeptide is Malate dehydrogenase (Bacillus licheniformis (strain ATCC 14580 / DSM 13 / JCM 2505 / CCUG 7422 / NBRC 12200 / NCIMB 9375 / NCTC 10341 / NRRL NRS-1264 / Gibson 46)).